The following is a 499-amino-acid chain: NADH-quinone oxidoreductase subunit N (499 aa).

14 helical membrane passes run 16–36 (AAFS…LDAF), 42–62 (AIPW…ITHL), 77–97 (GGFV…TILL), 109–129 (YGEV…LGSA), 133–153 (VSIF…TGFI), 167–187 (FLLG…MYGA), 208–228 (LLFW…VSAA), 252–272 (ATKA…VPGG), 274–294 (WQLS…VMAL), 302–322 (LLAY…SAGT), 327–347 (AGAL…FGVM), 376–396 (GSTM…GGFI), 411–433 (TWLV…RVVY), and 463–483 (GTLV…GGVL).

The protein belongs to the complex I subunit 2 family. As to quaternary structure, NDH-1 is composed of 14 different subunits. Subunits NuoA, H, J, K, L, M, N constitute the membrane sector of the complex.

It localises to the cell inner membrane. It catalyses the reaction a quinone + NADH + 5 H(+)(in) = a quinol + NAD(+) + 4 H(+)(out). NDH-1 shuttles electrons from NADH, via FMN and iron-sulfur (Fe-S) centers, to quinones in the respiratory chain. The immediate electron acceptor for the enzyme in this species is believed to be a menaquinone. Couples the redox reaction to proton translocation (for every two electrons transferred, four hydrogen ions are translocated across the cytoplasmic membrane), and thus conserves the redox energy in a proton gradient. This is NADH-quinone oxidoreductase subunit N from Salinibacter ruber (strain DSM 13855 / M31).